Consider the following 281-residue polypeptide: 33 kDa chaperonin (281 aa).

Intrachain disulfides connect Cys-229–Cys-231 and Cys-262–Cys-265.

This sequence belongs to the HSP33 family. In terms of processing, under oxidizing conditions two disulfide bonds are formed involving the reactive cysteines. Under reducing conditions zinc is bound to the reactive cysteines and the protein is inactive.

The protein localises to the cytoplasm. In terms of biological role, redox regulated molecular chaperone. Protects both thermally unfolding and oxidatively damaged proteins from irreversible aggregation. Plays an important role in the bacterial defense system toward oxidative stress. The protein is 33 kDa chaperonin of Pseudoalteromonas translucida (strain TAC 125).